The sequence spans 101 residues: Small ribosomal subunit protein uS14 (101 aa).

The protein belongs to the universal ribosomal protein uS14 family. Part of the 30S ribosomal subunit. Contacts proteins S3 and S10.

Functionally, binds 16S rRNA, required for the assembly of 30S particles and may also be responsible for determining the conformation of the 16S rRNA at the A site. The chain is Small ribosomal subunit protein uS14 from Nitrosospira multiformis (strain ATCC 25196 / NCIMB 11849 / C 71).